A 135-amino-acid polypeptide reads, in one-letter code: uncharacterized protein (135 aa).

This is an uncharacterized protein from Methanocaldococcus jannaschii (strain ATCC 43067 / DSM 2661 / JAL-1 / JCM 10045 / NBRC 100440) (Methanococcus jannaschii).